The primary structure comprises 874 residues: Alanine--tRNA ligase (874 aa).

Zn(2+) is bound by residues His-562, His-566, Cys-664, and His-668.

This sequence belongs to the class-II aminoacyl-tRNA synthetase family. Requires Zn(2+) as cofactor.

The protein localises to the cytoplasm. It catalyses the reaction tRNA(Ala) + L-alanine + ATP = L-alanyl-tRNA(Ala) + AMP + diphosphate. Functionally, catalyzes the attachment of alanine to tRNA(Ala) in a two-step reaction: alanine is first activated by ATP to form Ala-AMP and then transferred to the acceptor end of tRNA(Ala). Also edits incorrectly charged Ser-tRNA(Ala) and Gly-tRNA(Ala) via its editing domain. In Shewanella halifaxensis (strain HAW-EB4), this protein is Alanine--tRNA ligase.